Reading from the N-terminus, the 435-residue chain is Serine--tRNA ligase (435 aa).

238–240 (TAE) provides a ligand contact to L-serine. ATP is bound at residue 269–271 (RKE). Glutamate 292 is an L-serine binding site. 356 to 359 (EISS) serves as a coordination point for ATP. Serine 391 is a binding site for L-serine.

It belongs to the class-II aminoacyl-tRNA synthetase family. Type-1 seryl-tRNA synthetase subfamily. Homodimer. The tRNA molecule binds across the dimer.

The protein localises to the cytoplasm. It carries out the reaction tRNA(Ser) + L-serine + ATP = L-seryl-tRNA(Ser) + AMP + diphosphate + H(+). The catalysed reaction is tRNA(Sec) + L-serine + ATP = L-seryl-tRNA(Sec) + AMP + diphosphate + H(+). It participates in aminoacyl-tRNA biosynthesis; selenocysteinyl-tRNA(Sec) biosynthesis; L-seryl-tRNA(Sec) from L-serine and tRNA(Sec): step 1/1. Functionally, catalyzes the attachment of serine to tRNA(Ser). Is also able to aminoacylate tRNA(Sec) with serine, to form the misacylated tRNA L-seryl-tRNA(Sec), which will be further converted into selenocysteinyl-tRNA(Sec). This Leuconostoc mesenteroides subsp. mesenteroides (strain ATCC 8293 / DSM 20343 / BCRC 11652 / CCM 1803 / JCM 6124 / NCDO 523 / NBRC 100496 / NCIMB 8023 / NCTC 12954 / NRRL B-1118 / 37Y) protein is Serine--tRNA ligase.